Reading from the N-terminus, the 48-residue chain is ATP synthase protein 8 (48 aa).

A helical transmembrane segment spans residues 13–32 (VVFTLISLSFIFFVFSKYIL).

The protein belongs to the ATPase protein 8 family. F-type ATPases have 2 components, CF(1) - the catalytic core - and CF(0) - the membrane proton channel.

The protein localises to the mitochondrion membrane. Mitochondrial membrane ATP synthase (F(1)F(0) ATP synthase or Complex V) produces ATP from ADP in the presence of a proton gradient across the membrane which is generated by electron transport complexes of the respiratory chain. F-type ATPases consist of two structural domains, F(1) - containing the extramembraneous catalytic core and F(0) - containing the membrane proton channel, linked together by a central stalk and a peripheral stalk. During catalysis, ATP synthesis in the catalytic domain of F(1) is coupled via a rotary mechanism of the central stalk subunits to proton translocation. Part of the complex F(0) domain. Minor subunit located with subunit a in the membrane. This Trichophyton rubrum (Athlete's foot fungus) protein is ATP synthase protein 8 (ATP8).